Consider the following 184-residue polypeptide: MKNVTDSFVSLGHWPSAGSFGVNTDILATNPINLSVVLGVLIFFGKGVLSDLLDNRKERILNTIRNSEELRGGAIERLEKARARLRKVEMEADQFRVNGYSEIEREKLNLINSTYKILEQLENYKNETIYFEQQRAINQVRQRVFQQALQGALGTLNSSLNNELHLRTISANIGLFGVMKEITD.

A helical membrane pass occupies residues 27 to 49 (LATNPINLSVVLGVLIFFGKGVL).

Belongs to the ATPase B chain family. F-type ATPases have 2 components, F(1) - the catalytic core - and F(0) - the membrane proton channel. F(1) has five subunits: alpha(3), beta(3), gamma(1), delta(1), epsilon(1). F(0) has four main subunits: a(1), b(1), b'(1) and c(10-14). The alpha and beta chains form an alternating ring which encloses part of the gamma chain. F(1) is attached to F(0) by a central stalk formed by the gamma and epsilon chains, while a peripheral stalk is formed by the delta, b and b' chains.

Its subcellular location is the plastid. The protein resides in the chloroplast thylakoid membrane. Its function is as follows. F(1)F(0) ATP synthase produces ATP from ADP in the presence of a proton or sodium gradient. F-type ATPases consist of two structural domains, F(1) containing the extramembraneous catalytic core and F(0) containing the membrane proton channel, linked together by a central stalk and a peripheral stalk. During catalysis, ATP synthesis in the catalytic domain of F(1) is coupled via a rotary mechanism of the central stalk subunits to proton translocation. Functionally, component of the F(0) channel, it forms part of the peripheral stalk, linking F(1) to F(0). This is ATP synthase subunit b, chloroplastic from Gossypium barbadense (Sea Island cotton).